A 338-amino-acid chain; its full sequence is Dihydroorotate dehydrogenase (quinone) (338 aa).

Residues 68-72 (AGMDK) and Thr92 each bind FMN. Lys72 serves as a coordination point for substrate. Residue 117 to 121 (NRMGF) coordinates substrate. FMN contacts are provided by Ser147 and Asn180. Position 180 (Asn180) interacts with substrate. Ser183 (nucleophile) is an active-site residue. Asn185 serves as a coordination point for substrate. FMN contacts are provided by Lys214 and Thr242. 243-244 (NT) serves as a coordination point for substrate. Residues Gly267, Gly296, and 317 to 318 (YT) contribute to the FMN site.

Belongs to the dihydroorotate dehydrogenase family. Type 2 subfamily. In terms of assembly, monomer. It depends on FMN as a cofactor.

The protein resides in the cell membrane. It carries out the reaction (S)-dihydroorotate + a quinone = orotate + a quinol. The protein operates within pyrimidine metabolism; UMP biosynthesis via de novo pathway; orotate from (S)-dihydroorotate (quinone route): step 1/1. Catalyzes the conversion of dihydroorotate to orotate with quinone as electron acceptor. The protein is Dihydroorotate dehydrogenase (quinone) of Salinispora arenicola (strain CNS-205).